Consider the following 318-residue polypeptide: MRRANRDYGKYLRGSEEMGSCPGVPHEGPLHPAPSAPAPAPPPAASRFMFLALLGLGLGQVVCSIALFLYFRAQMDPNRISEDSTRCFYRILRLRENTGLQDSTLESEDTEALPDSCRRMKQAFQGAVQRELQHIVGPQRFSGVPAMMEGSWLDVARRGKPEAQPFAHLTINAADIPSGSHKVSLSSWYHDRGWAKISNMTLSNGKLRVNQDGFYYLYANICFRHHETSGSVPADYLQLMVYVVKTSIKIPSSHNLMKGGSTKNWSGNSEFHFYSINVGGFFKLRAGEEISVQVSNPSLLDPDQDATYFGAFKVQDID.

Topologically, residues 1-47 (MRRANRDYGKYLRGSEEMGSCPGVPHEGPLHPAPSAPAPAPPPAASR) are cytoplasmic. The disordered stretch occupies residues 13-41 (RGSEEMGSCPGVPHEGPLHPAPSAPAPAP). Positions 31–41 (HPAPSAPAPAP) are enriched in pro residues. Residues 48–68 (FMFLALLGLGLGQVVCSIALF) form a helical; Signal-anchor for type II membrane protein membrane-spanning segment. The Extracellular portion of the chain corresponds to 69 to 318 (LYFRAQMDPN…FGAFKVQDID (250 aa)). A THD domain is found at 165–314 (PFAHLTINAA…DATYFGAFKV (150 aa)). Residues N199 and N264 are each glycosylated (N-linked (GlcNAc...) asparagine).

It belongs to the tumor necrosis factor family. As to quaternary structure, homotrimer. Interacts with TNFRSF11A and TNFRSF11B. Interacts with FBN1 (via N-terminal domain) in a Ca(+2)-dependent manner. Interacts with TNFAIP6 (via both Link and CUB domains). Post-translationally, the soluble form derives from the membrane form by proteolytic processing. In terms of tissue distribution, highly expressed in thymus and bone tissues.

The protein resides in the cell membrane. The protein localises to the secreted. Functionally, cytokine that binds to TNFRSF11B/OPG and to TNFRSF11A/RANK. Osteoclast differentiation and activation factor. Augments the ability of dendritic cells to stimulate naive T-cell proliferation. May be an important regulator of interactions between T-cells and dendritic cells and may play a role in the regulation of the T-cell-dependent immune response. May also play an important role in enhanced bone-resorption in humoral hypercalcemia of malignancy. Induces osteoclastogenesis by activating multiple signaling pathways in osteoclast precursor cells, chief among which is induction of long lasting oscillations in the intracellular concentration of Ca (2+) resulting in the activation of NFATC1, which translocates to the nucleus and induces osteoclast-specific gene transcription to allow differentiation of osteoclasts. During osteoclast differentiation, in a TMEM64 and ATP2A2-dependent manner induces activation of CREB1 and mitochondrial ROS generation necessary for proper osteoclast generation. The protein is Tumor necrosis factor ligand superfamily member 11 (Tnfsf11) of Rattus norvegicus (Rat).